Reading from the N-terminus, the 238-residue chain is tRNA (guanine-N(7)-)-methyltransferase (238 aa).

Residues glutamate 68, glutamate 93, aspartate 120, and aspartate 143 each contribute to the S-adenosyl-L-methionine site. Aspartate 143 is a catalytic residue. Residues lysine 147, aspartate 179, and 216-219 (TKFE) contribute to the substrate site.

This sequence belongs to the class I-like SAM-binding methyltransferase superfamily. TrmB family.

It carries out the reaction guanosine(46) in tRNA + S-adenosyl-L-methionine = N(7)-methylguanosine(46) in tRNA + S-adenosyl-L-homocysteine. Its pathway is tRNA modification; N(7)-methylguanine-tRNA biosynthesis. Functionally, catalyzes the formation of N(7)-methylguanine at position 46 (m7G46) in tRNA. This Shewanella woodyi (strain ATCC 51908 / MS32) protein is tRNA (guanine-N(7)-)-methyltransferase.